Here is a 350-residue protein sequence, read N- to C-terminus: Alcohol dehydrogenase 1 (350 aa).

Zn(2+) contacts are provided by Cys-46, His-69, Cys-100, Cys-103, Cys-106, Cys-114, and Cys-156. Residues 180–186 (GAAGGLG), Asp-204, Lys-209, 271–273 (VGL), and Arg-343 each bind NAD(+).

The protein belongs to the zinc-containing alcohol dehydrogenase family. In terms of assembly, homotetramer. Requires Zn(2+) as cofactor.

Its subcellular location is the cytoplasm. The enzyme catalyses a primary alcohol + NAD(+) = an aldehyde + NADH + H(+). It carries out the reaction a secondary alcohol + NAD(+) = a ketone + NADH + H(+). The sequence is that of Alcohol dehydrogenase 1 (ADH1) from Kluyveromyces lactis (strain ATCC 8585 / CBS 2359 / DSM 70799 / NBRC 1267 / NRRL Y-1140 / WM37) (Yeast).